The sequence spans 104 residues: Large ribosomal subunit protein bL21 (104 aa).

It belongs to the bacterial ribosomal protein bL21 family. In terms of assembly, part of the 50S ribosomal subunit. Contacts protein L20.

Functionally, this protein binds to 23S rRNA in the presence of protein L20. This chain is Large ribosomal subunit protein bL21, found in Pseudomonas putida (strain W619).